The sequence spans 432 residues: Argininosuccinate lyase (432 aa).

It belongs to the lyase 1 family. Argininosuccinate lyase subfamily.

It localises to the cytoplasm. The catalysed reaction is 2-(N(omega)-L-arginino)succinate = fumarate + L-arginine. It functions in the pathway amino-acid biosynthesis; L-arginine biosynthesis; L-arginine from L-ornithine and carbamoyl phosphate: step 3/3. The protein is Argininosuccinate lyase of Xanthomonas axonopodis pv. citri (strain 306).